Here is a 252-residue protein sequence, read N- to C-terminus: O-methyltransferase hkm8 (252 aa).

S-adenosyl-L-methionine contacts are provided by residues Glu-73, 75-76 (GT), Ser-81, and Asp-100.

The protein belongs to the class I-like SAM-binding methyltransferase superfamily. Cation-dependent O-methyltransferase family.

The protein operates within secondary metabolite biosynthesis. O-methyltransferase; part of the gene cluster that mediates the biosynthesis of hancockiamides, an unusual new family of N-cinnamoylated piperazines. The NRPS hkm10 and the NmrA-like reductase hkm9 are proposed to convert two molecules of L-Phe to the intermediary piperazine called xenocockiamide A. Xenocockiamide A is then converted to hancockiamide D via a series of hydroxylations and O-methylations. The tyrosinase hkm6 may catalyze an aromatic hydroxylation, then the 2-oxoglutarate-dependent Fe(II) dioxygenase hkm4 and the FAD-dependent phenol hydroxylase hkm7 may catalyze consecutive hydroxylations to install 2 more hydroxy groups, and the methyltransferase hkm8 probably catalyzes two methylations using 2 molecules of S-adenosyl-L-methionine (SAM). The NRPS hkm11 activates and transfers trans-cinnamate supplied by the PAL hkm12 to hancockiamide D and produces hancockiamide A. NRPS Hkm11 has the flexibility to tolerate the bulky hancockiamide G as a substrate and the absence of the acetyl-transferase hkm3 opens up the opportunity for hkm11 to introduce a second N-cinnamoyl moiety. The cytochrome P450 monooxygenase hkm5 catalyzes the methylenedioxy bridge formation, converting hancockiamide A into hancockiamide G. Hkm5 can also convert hancockiamide B into hancockiamide C, and hancockiamide D into hancockiamide H. The N-acetyltransferase hkm3 finally transfers an acetyl group to 1-N of piperazine, converting hancockiamide A into hancockiamide B and hancockiamide G into hancockiamide C. This is O-methyltransferase hkm8 from Aspergillus hancockii.